The primary structure comprises 850 residues: Coiled-coil and C2 domain-containing protein 1B (850 aa).

Residues 1 to 10 (MPGPRPRKGP) show a composition bias toward basic residues. 3 disordered regions span residues 1 to 21 (MPGP…ETAK), 54 to 73 (LTGE…RAPL), and 114 to 145 (GVDE…EQPV). Residues 114 to 129 (GVDEETGLVDDSEETS) show a composition bias toward acidic residues. The stretch at 167–213 (LQALLEERIQNYREAAASAKEAGEAAKARRCERGLKTLESQLATVRK) forms a coiled coil. 2 disordered regions span residues 215–277 (GKIC…SDPD) and 436–525 (FAEL…SPSV). The span at 234-244 (AHQERPSKDSE) shows a compositional bias: basic and acidic residues. Pro residues predominate over residues 440–450 (PVPPGFPPIPG). Composition is skewed to low complexity over residues 489–502 (PAQA…AQPL) and 511–524 (EPKA…LSPS). The residue at position 585 (Ser-585) is a Phosphoserine. A Phosphothreonine modification is found at Thr-588. A C2 domain is found at 668–807 (DPPSHHFELK…EKECEIREIM (140 aa)).

In terms of assembly, interacts with CHMP4B. In terms of tissue distribution, expressed in epididymal sperm but not in testicular sperm (at protein level).

It is found in the nucleus. Functionally, transcription factor that binds specifically to the DRE (dual repressor element) and represses HTR1A gene transcription in neuronal cells. The chain is Coiled-coil and C2 domain-containing protein 1B (Cc2d1b) from Rattus norvegicus (Rat).